A 163-amino-acid polypeptide reads, in one-letter code: uncharacterized protein (163 aa).

This is an uncharacterized protein from Dictyostelium discoideum (Social amoeba).